The sequence spans 379 residues: Transaminase htyB (379 aa).

Arg-92 provides a ligand contact to pyridoxal 5'-phosphate. At Lys-203 the chain carries N6-(pyridoxal phosphate)lysine. Glu-239 is a pyridoxal 5'-phosphate binding site.

It belongs to the class-IV pyridoxal-phosphate-dependent aminotransferase family. Requires pyridoxal 5'-phosphate as cofactor.

It participates in antifungal biosynthesis. In terms of biological role, transaminase; part of the gene cluster that mediates the de novo generation of L-homotyrosine from acetyl-CoA and 4-hydroxyphenyl-pyruvate. L-homotyrosine is a building block of echinocandin B, a fungal lipidated cyclic hexapeptide that acts as an antifungal agent. L-homotyrosine 4-hydroxyphenyl-pyruvate first undergoes an aldol-type condensation by htyA with the C-2 of acetyl-CoA followed by the release of CoA to form 2-(4-hydroxybenzyl)-malate. This is followed by isomerization of 2-(4-hydroxy-benzyl)-malate to 3-(4-hydroxybenzyl)-malate by htyD. Thereafter, 3-(4-hydroxybenzyl)-malate undergoes decarboxylation and oxidation to form 2-oxo-4-(4-hydroxybenzyl)butanoic acid, coupled to reduction of NAD(+) to NADH by htyC. The product then undergoes transamination catalyzed by htyB to form L-homotyrosine. The protein is Transaminase htyB of Aspergillus rugulosus (Emericella rugulosa).